We begin with the raw amino-acid sequence, 130 residues long: Small ribosomal subunit protein uS8 (130 aa).

This sequence belongs to the universal ribosomal protein uS8 family. As to quaternary structure, part of the 30S ribosomal subunit. Contacts proteins S5 and S12.

In terms of biological role, one of the primary rRNA binding proteins, it binds directly to 16S rRNA central domain where it helps coordinate assembly of the platform of the 30S subunit. The protein is Small ribosomal subunit protein uS8 of Tolumonas auensis (strain DSM 9187 / NBRC 110442 / TA 4).